Reading from the N-terminus, the 277-residue chain is Putative protein-disulfide oxidoreductase RC0029 (277 aa).

The first 22 residues, 1–22, serve as a signal peptide directing secretion; it reads MRSIFIILIFLLFLSSCSEEKA. The tract at residues 34–80 is disordered; that stretch reads EHETQNNETSKATNQEAVNSENTTESIVPANDNNQTDEVSTPASQKQ. A compositionally biased stretch (polar residues) spans 39 to 80; it reads NNETSKATNQEAVNSENTTESIVPANDNNQTDEVSTPASQKQ. Positions 76 to 265 constitute a Thioredoxin domain; sequence ASQKQKNPAI…ISTAVDKALE (190 aa). The cysteines at positions 118 and 121 are disulfide-linked.

It belongs to the thioredoxin family. DsbA subfamily.

The protein localises to the periplasm. May be required for disulfide bond formation in some proteins. In Rickettsia conorii (strain ATCC VR-613 / Malish 7), this protein is Putative protein-disulfide oxidoreductase RC0029.